Reading from the N-terminus, the 188-residue chain is Elongation factor P (188 aa).

The protein belongs to the elongation factor P family.

It is found in the cytoplasm. The protein operates within protein biosynthesis; polypeptide chain elongation. Involved in peptide bond synthesis. Stimulates efficient translation and peptide-bond synthesis on native or reconstituted 70S ribosomes in vitro. Probably functions indirectly by altering the affinity of the ribosome for aminoacyl-tRNA, thus increasing their reactivity as acceptors for peptidyl transferase. This is Elongation factor P from Rhodopseudomonas palustris (strain TIE-1).